The primary structure comprises 740 residues: MEQTYEYAWIIPFIPLPVPMLIGAGLFLFPTATKSFRRMWAFQSVLLLSIVMVFSIYLSIQQINSSSFYQYVWSWIINNDFSLDFGYLIDPLTSIMSILITTVGIMVLIYSDNYMAHDQGYLRFFAYMSFFSTSMLGLVTSSNLIQIYIFWELVGLCSYLLIGFWFTRPVAANACQKAFVTNRVGDFGLLLGILGFYWITGSFEFRDLFEIFNNLIYNNEVDFLFVTLCAVLLFAGAVAKSAQFPLHVWLPDAMEGPTPISALIHAATMVAAGIFLVARLLPLFRVIPYIMYLISVIGIITVLLGATLALAQKDIKRGLAYSTMSQLGYMMLALGMGSYRSALFHLITHAYSKALLFLGSGSIIHSMETIVGYSPAKSQNMGLMGGLRKHVPISKITFLLGTLSLCGIPPLACFWSKDEILNDSWLYSPIFAIIAWATAGLTAFYMFRIYLLTFEGHLNAHFPNYGGKQKTPFYSISLWGKNGVKKNSCLLTMNNNESTYFFAKTKYPIDKNGRKMTRPFMTIAHFEHKAVYSYPYESDNTMLFPIFVLGLFTLFVGSIGIPFNQEGGNLDILSKWLAPSINLLHQKSNNSMDWNEFLKDAVLSVSIAYFGIFIASFLYKPIYSSLKNFELINSFVKKGPKRILWDKIINGIYDWSYNRAYIDAFYTRFLVGGIRGLAEFTHFFDRRVIDGMTNGVGVISFIVGEGIKYIGGGRISSYLFLYLAYVSIFLLVYYLLFSTL.

A run of 16 helical transmembrane segments spans residues 9 to 29 (WIIP…LFLF), 40 to 60 (WAFQ…YLSI), 89 to 109 (IDPL…MVLI), 125 to 145 (FAYM…SNLI), 147 to 167 (IYIF…FWFT), 185 to 205 (GDFG…SFEF), 219 to 239 (NEVD…GAVA), 258 to 278 (TPIS…FLVA), 286 to 306 (VIPY…LLGA), 327 to 347 (LGYM…FHLI), 354 to 374 (ALLF…VGYS), 396 to 416 (ITFL…CFWS), 425 to 445 (WLYS…TAFY), 543 to 563 (LFPI…GIPF), 602 to 622 (VLSV…YKPI), and 717 to 737 (SYLF…YLLF).

This sequence belongs to the complex I subunit 5 family. As to quaternary structure, NDH is composed of at least 16 different subunits, 5 of which are encoded in the nucleus.

Its subcellular location is the plastid. The protein resides in the chloroplast thylakoid membrane. The enzyme catalyses a plastoquinone + NADH + (n+1) H(+)(in) = a plastoquinol + NAD(+) + n H(+)(out). The catalysed reaction is a plastoquinone + NADPH + (n+1) H(+)(in) = a plastoquinol + NADP(+) + n H(+)(out). Functionally, NDH shuttles electrons from NAD(P)H:plastoquinone, via FMN and iron-sulfur (Fe-S) centers, to quinones in the photosynthetic chain and possibly in a chloroplast respiratory chain. The immediate electron acceptor for the enzyme in this species is believed to be plastoquinone. Couples the redox reaction to proton translocation, and thus conserves the redox energy in a proton gradient. This is NAD(P)H-quinone oxidoreductase subunit 5, chloroplastic (ndhF) from Nicotiana tabacum (Common tobacco).